The primary structure comprises 215 residues: Adenylate kinase (215 aa).

Residue G10–T15 participates in ATP binding. The tract at residues S30–V59 is NMP. AMP contacts are provided by residues T31, R36, G57 to V59, G85 to R88, and Q92. Positions G122 to D159 are LID. Residues R123 and I132–Y133 each bind ATP. R156 and R167 together coordinate AMP. G201 is an ATP binding site.

The protein belongs to the adenylate kinase family. Monomer.

It localises to the cytoplasm. It catalyses the reaction AMP + ATP = 2 ADP. It participates in purine metabolism; AMP biosynthesis via salvage pathway; AMP from ADP: step 1/1. Functionally, catalyzes the reversible transfer of the terminal phosphate group between ATP and AMP. Plays an important role in cellular energy homeostasis and in adenine nucleotide metabolism. The polypeptide is Adenylate kinase (Pseudomonas syringae pv. syringae (strain B728a)).